A 371-amino-acid chain; its full sequence is Peptidyl-prolyl cis-trans isomerase D (371 aa).

In terms of domain architecture, PPIase cyclophilin-type spans 11–172 (FFDIQIGNEK…KDVTIVECGE (162 aa)). The tract at residues 175–195 (GQDYDDADKQTPDATGDPYED) is disordered. TPR repeat units lie at residues 214–247 (ASEL…LHEF), 267–300 (FALH…ANAA), and 308–341 (AKAY…APGD).

Belongs to the cyclophilin-type PPIase family. PPIase D subfamily.

Its subcellular location is the cytoplasm. It catalyses the reaction [protein]-peptidylproline (omega=180) = [protein]-peptidylproline (omega=0). In terms of biological role, PPIases accelerate the folding of proteins. It catalyzes the cis-trans isomerization of proline imidic peptide bonds in oligopeptides. The chain is Peptidyl-prolyl cis-trans isomerase D (cpr6) from Aspergillus oryzae (strain ATCC 42149 / RIB 40) (Yellow koji mold).